The sequence spans 86 residues: Acyl carrier protein (86 aa).

The Carrier domain occupies Glu5–Ile80. Ser40 bears the O-(pantetheine 4'-phosphoryl)serine mark.

This sequence belongs to the acyl carrier protein (ACP) family. 4'-phosphopantetheine is transferred from CoA to a specific serine of apo-ACP by AcpS. This modification is essential for activity because fatty acids are bound in thioester linkage to the sulfhydryl of the prosthetic group.

The protein localises to the plastid. Its subcellular location is the chloroplast. It participates in lipid metabolism; fatty acid biosynthesis. Functionally, carrier of the growing fatty acid chain in fatty acid biosynthesis. The protein is Acyl carrier protein of Cyanidium caldarium (Red alga).